The following is a 117-amino-acid chain: MAISLTEEDFVVKVFDYKNDKEWSFRGDRPAIIDFYANWCGPCKMLSPIFEKLSKKYENSIDFYKVDTDKEQDISSAIGVQSLPTILFIPVDGKPKVSVGFLQEDAFENIIKDFFGF.

Positions 2-116 (AISLTEEDFV…FENIIKDFFG (115 aa)) constitute a Thioredoxin domain. Cysteine 40 and cysteine 43 are oxidised to a cystine.

The protein belongs to the thioredoxin family.

Functionally, participates in various redox reactions through the reversible oxidation of its active center dithiol to a disulfide and catalyzes dithiol-disulfide exchange reactions. The polypeptide is Thioredoxin (trxA) (Borreliella burgdorferi (strain ATCC 35210 / DSM 4680 / CIP 102532 / B31) (Borrelia burgdorferi)).